A 343-amino-acid polypeptide reads, in one-letter code: Tetraacyldisaccharide 4'-kinase (343 aa).

51–58 contacts ATP; it reads TVGGAGKT.

The protein belongs to the LpxK family.

The enzyme catalyses a lipid A disaccharide + ATP = a lipid IVA + ADP + H(+). It participates in glycolipid biosynthesis; lipid IV(A) biosynthesis; lipid IV(A) from (3R)-3-hydroxytetradecanoyl-[acyl-carrier-protein] and UDP-N-acetyl-alpha-D-glucosamine: step 6/6. Its function is as follows. Transfers the gamma-phosphate of ATP to the 4'-position of a tetraacyldisaccharide 1-phosphate intermediate (termed DS-1-P) to form tetraacyldisaccharide 1,4'-bis-phosphate (lipid IVA). The sequence is that of Tetraacyldisaccharide 4'-kinase from Xanthobacter autotrophicus (strain ATCC BAA-1158 / Py2).